The chain runs to 842 residues: Glycogen phosphorylase, muscle form (842 aa).

Ser-2 carries the post-translational modification N-acetylserine. Residue Ser-15 is modified to Phosphoserine; by PHK; in form phosphorylase A. Position 26 is a phosphoserine (Ser-26). Residues Asp-43 and Tyr-76 each coordinate AMP. Tyr-204 and Tyr-227 each carry phosphotyrosine. Residue 310–319 (RRFKSSKFGC) participates in AMP binding. The residue at position 430 (Ser-430) is a Phosphoserine. The residue at position 473 (Tyr-473) is a Phosphotyrosine. Residue Ser-514 is modified to Phosphoserine. Lys-681 carries the post-translational modification N6-(pyridoxal phosphate)lysine. A phosphoserine mark is found at Ser-747 and Ser-748.

This sequence belongs to the glycogen phosphorylase family. As to quaternary structure, homodimer. Homotetramer; to form the enzymatically active phosphorylase A. The cofactor is pyridoxal 5'-phosphate. Post-translationally, phosphorylation of Ser-15 converts phosphorylase B (unphosphorylated) to phosphorylase A.

It carries out the reaction [(1-&gt;4)-alpha-D-glucosyl](n) + phosphate = [(1-&gt;4)-alpha-D-glucosyl](n-1) + alpha-D-glucose 1-phosphate. Allosterically regulated through the non-covalent binding of metabolites, being activated by AMP and inhibited by ATP, ADP, and glucose-6-phosphate. The activity is also controlled by post-translational modifications including phosphorylation. Its function is as follows. Allosteric enzyme that catalyzes the rate-limiting step in glycogen catabolism, the phosphorolytic cleavage of glycogen to produce glucose-1-phosphate, and plays a central role in maintaining cellular and organismal glucose homeostasis. The sequence is that of Glycogen phosphorylase, muscle form from Rattus norvegicus (Rat).